The following is a 314-amino-acid chain: Acetaldehyde dehydrogenase 2 (314 aa).

An NAD(+)-binding site is contributed by 15 to 18 (SGNI). Cysteine 133 acts as the Acyl-thioester intermediate in catalysis. NAD(+)-binding positions include 164-172 (SAGPGTRQN) and asparagine 289.

This sequence belongs to the acetaldehyde dehydrogenase family.

The catalysed reaction is acetaldehyde + NAD(+) + CoA = acetyl-CoA + NADH + H(+). This Nocardioides sp. (strain ATCC BAA-499 / JS614) protein is Acetaldehyde dehydrogenase 2.